A 294-amino-acid chain; its full sequence is Pyridoxal 5'-phosphate synthase subunit PdxS (294 aa).

Residue aspartate 24 coordinates D-ribose 5-phosphate. The active-site Schiff-base intermediate with D-ribose 5-phosphate is the lysine 81. Glycine 153 serves as a coordination point for D-ribose 5-phosphate. Arginine 165 is a D-glyceraldehyde 3-phosphate binding site. D-ribose 5-phosphate contacts are provided by residues glycine 214 and 235–236 (GS).

This sequence belongs to the PdxS/SNZ family. As to quaternary structure, in the presence of PdxT, forms a dodecamer of heterodimers.

It catalyses the reaction aldehydo-D-ribose 5-phosphate + D-glyceraldehyde 3-phosphate + L-glutamine = pyridoxal 5'-phosphate + L-glutamate + phosphate + 3 H2O + H(+). Its pathway is cofactor biosynthesis; pyridoxal 5'-phosphate biosynthesis. Its function is as follows. Catalyzes the formation of pyridoxal 5'-phosphate from ribose 5-phosphate (RBP), glyceraldehyde 3-phosphate (G3P) and ammonia. The ammonia is provided by the PdxT subunit. Can also use ribulose 5-phosphate and dihydroxyacetone phosphate as substrates, resulting from enzyme-catalyzed isomerization of RBP and G3P, respectively. The protein is Pyridoxal 5'-phosphate synthase subunit PdxS of Bacillus licheniformis (strain ATCC 14580 / DSM 13 / JCM 2505 / CCUG 7422 / NBRC 12200 / NCIMB 9375 / NCTC 10341 / NRRL NRS-1264 / Gibson 46).